The chain runs to 21 residues: Large ribosomal subunit protein uL30 (21 aa).

A compositionally biased stretch (polar residues) spans 1-15 (AKTENKTVTVRQTAS). The disordered stretch occupies residues 1–21 (AKTENKTVTVRQTASPIXXXK).

This sequence belongs to the universal ribosomal protein uL30 family. In terms of assembly, part of the 50S ribosomal subunit.

The polypeptide is Large ribosomal subunit protein uL30 (rpmD) (Brevundimonas diminuta (Pseudomonas diminuta)).